We begin with the raw amino-acid sequence, 259 residues long: 5'-nucleotidase SurE (259 aa).

4 residues coordinate a divalent metal cation: aspartate 8, aspartate 9, serine 39, and asparagine 96.

The protein belongs to the SurE nucleotidase family. A divalent metal cation is required as a cofactor.

It is found in the cytoplasm. The catalysed reaction is a ribonucleoside 5'-phosphate + H2O = a ribonucleoside + phosphate. Its function is as follows. Nucleotidase that shows phosphatase activity on nucleoside 5'-monophosphates. This chain is 5'-nucleotidase SurE, found in Pelotomaculum thermopropionicum (strain DSM 13744 / JCM 10971 / SI).